The primary structure comprises 217 residues: Phosphatidylserine decarboxylase proenzyme (217 aa).

Residue serine 183 is the Schiff-base intermediate with substrate; via pyruvic acid of the active site. Serine 183 carries the pyruvic acid (Ser); by autocatalysis modification.

It belongs to the phosphatidylserine decarboxylase family. PSD-A subfamily. As to quaternary structure, heterodimer of a large membrane-associated beta subunit and a small pyruvoyl-containing alpha subunit. It depends on pyruvate as a cofactor. Post-translationally, is synthesized initially as an inactive proenzyme. Formation of the active enzyme involves a self-maturation process in which the active site pyruvoyl group is generated from an internal serine residue via an autocatalytic post-translational modification. Two non-identical subunits are generated from the proenzyme in this reaction, and the pyruvate is formed at the N-terminus of the alpha chain, which is derived from the carboxyl end of the proenzyme. The post-translation cleavage follows an unusual pathway, termed non-hydrolytic serinolysis, in which the side chain hydroxyl group of the serine supplies its oxygen atom to form the C-terminus of the beta chain, while the remainder of the serine residue undergoes an oxidative deamination to produce ammonia and the pyruvoyl prosthetic group on the alpha chain.

It localises to the cell membrane. The catalysed reaction is a 1,2-diacyl-sn-glycero-3-phospho-L-serine + H(+) = a 1,2-diacyl-sn-glycero-3-phosphoethanolamine + CO2. It participates in phospholipid metabolism; phosphatidylethanolamine biosynthesis; phosphatidylethanolamine from CDP-diacylglycerol: step 2/2. In terms of biological role, catalyzes the formation of phosphatidylethanolamine (PtdEtn) from phosphatidylserine (PtdSer). The polypeptide is Phosphatidylserine decarboxylase proenzyme (Cupriavidus pinatubonensis (strain JMP 134 / LMG 1197) (Cupriavidus necator (strain JMP 134))).